The following is a 512-amino-acid chain: Sodium/proline symporter (512 aa).

A run of 13 helical transmembrane segments spans residues Trp-16–Gly-36, Ile-54–Met-74, Leu-85–Val-105, Ile-139–Ser-159, Phe-174–Ala-194, Phe-200–Asn-220, Leu-240–Phe-260, Ile-286–Phe-306, Val-327–Ser-347, Phe-381–Trp-401, Leu-410–Leu-430, Ala-438–Ile-458, and Ile-467–Val-487.

It belongs to the sodium:solute symporter (SSF) (TC 2.A.21) family.

Its subcellular location is the cell membrane. It carries out the reaction L-proline(in) + Na(+)(in) = L-proline(out) + Na(+)(out). Its function is as follows. Catalyzes the sodium-dependent uptake of extracellular L-proline. Since most S.aureus strains are L-proline auxotrophs, this transporter may aid the bacterial persistence during an infection of tissues with low proline concentrations. The polypeptide is Sodium/proline symporter (putP) (Staphylococcus aureus (strain Mu3 / ATCC 700698)).